A 364-amino-acid chain; its full sequence is tRNA/tmRNA (uracil-C(5))-methyltransferase (364 aa).

S-adenosyl-L-methionine contacts are provided by Gln188, Tyr216, Asn221, Glu237, and Asp297. Cys322 acts as the Nucleophile in catalysis. Glu356 functions as the Proton acceptor in the catalytic mechanism.

The protein belongs to the class I-like SAM-binding methyltransferase superfamily. RNA M5U methyltransferase family. TrmA subfamily.

It carries out the reaction uridine(54) in tRNA + S-adenosyl-L-methionine = 5-methyluridine(54) in tRNA + S-adenosyl-L-homocysteine + H(+). The enzyme catalyses uridine(341) in tmRNA + S-adenosyl-L-methionine = 5-methyluridine(341) in tmRNA + S-adenosyl-L-homocysteine + H(+). Its function is as follows. Dual-specificity methyltransferase that catalyzes the formation of 5-methyluridine at position 54 (m5U54) in all tRNAs, and that of position 341 (m5U341) in tmRNA (transfer-mRNA). The chain is tRNA/tmRNA (uracil-C(5))-methyltransferase from Colwellia psychrerythraea (strain 34H / ATCC BAA-681) (Vibrio psychroerythus).